Here is a 624-residue protein sequence, read N- to C-terminus: Chaperone protein HtpG (624 aa).

Residues 1–336 (MSMKGQETRG…SNDLPLNVSR (336 aa)) form an a; substrate-binding region. Positions 337 to 552 (EILQDSRVTQ…ADEMSTQMAK (216 aa)) are b. Residues 553 to 624 (LFAAAGQQAP…IRRMNQLLTA (72 aa)) are c.

This sequence belongs to the heat shock protein 90 family. As to quaternary structure, homodimer.

Its subcellular location is the cytoplasm. Its function is as follows. Molecular chaperone. Has ATPase activity. The polypeptide is Chaperone protein HtpG (Yersinia enterocolitica serotype O:8 / biotype 1B (strain NCTC 13174 / 8081)).